A 203-amino-acid polypeptide reads, in one-letter code: E3 ubiquitin-protein ligase rnf152-A (203 aa).

Residues 12 to 55 form an RING-type; degenerate zinc finger; the sequence is CQICFNYYSPRRRPKLLDCKRTCCSVCLQQMRACQKDLRCPWCR. A helical membrane pass occupies residues 167–187; that stretch reads SGICTVILVACVLVFLLGIVL.

Belongs to the RNF152 family.

It is found in the lysosome membrane. It catalyses the reaction S-ubiquitinyl-[E2 ubiquitin-conjugating enzyme]-L-cysteine + [acceptor protein]-L-lysine = [E2 ubiquitin-conjugating enzyme]-L-cysteine + N(6)-ubiquitinyl-[acceptor protein]-L-lysine.. Its pathway is protein modification; protein ubiquitination. E3 ubiquitin-protein ligase that acts as a negative regulator of mTORC1 signaling by mediating ubiquitination of RagA/RRAGA and RHEB. Catalyzes 'Lys-63'-linked polyubiquitination of RagA/RRAGA in response to amino acid starvation, thereby regulating mTORC1 signaling. Also mediates monoubiquitination of RHEB, promoting its association with the TSC-TBC complex and subsequent inhibition. Also mediates 'Lys-48'-linked polyubiquitination of target proteins and their subsequent targeting to the proteasome for degradation. This Xenopus laevis (African clawed frog) protein is E3 ubiquitin-protein ligase rnf152-A.